A 331-amino-acid polypeptide reads, in one-letter code: Osmotic avoidance abnormal protein 8 (331 aa).

The N-terminal stretch at 1 to 21 (MPAKMLKWLLIHIFLIHSIFC) is a signal peptide.

As to expression, expressed in the hypodermal syncitium but not in hypodermal seam cells.

It is found in the secreted. Negative regulator of the osmotic stress response. Acts via the transmembrane protein ptr-23. This is Osmotic avoidance abnormal protein 8 (osm-8) from Caenorhabditis elegans.